The following is a 666-amino-acid chain: UvrABC system protein B (666 aa).

Residues 25-412 (NGIKNNNKWQ…SENIAEQVIR (388 aa)) enclose the Helicase ATP-binding domain. 38–45 (GVTGSGKT) contacts ATP. The short motif at 91-114 (YYDYYQPEAYVAQTDTYIEKDASI) is the Beta-hairpin element. A Helicase C-terminal domain is found at 429–595 (QIDDLYSEIK…TIKKAVRDVI (167 aa)). A UVR domain is found at 622–657 (DKLIKEFEKEMKEAAKELQFEKAAYFRDKVNELKKK).

This sequence belongs to the UvrB family. As to quaternary structure, forms a heterotetramer with UvrA during the search for lesions. Interacts with UvrC in an incision complex.

Its subcellular location is the cytoplasm. In terms of biological role, the UvrABC repair system catalyzes the recognition and processing of DNA lesions. A damage recognition complex composed of 2 UvrA and 2 UvrB subunits scans DNA for abnormalities. Upon binding of the UvrA(2)B(2) complex to a putative damaged site, the DNA wraps around one UvrB monomer. DNA wrap is dependent on ATP binding by UvrB and probably causes local melting of the DNA helix, facilitating insertion of UvrB beta-hairpin between the DNA strands. Then UvrB probes one DNA strand for the presence of a lesion. If a lesion is found the UvrA subunits dissociate and the UvrB-DNA preincision complex is formed. This complex is subsequently bound by UvrC and the second UvrB is released. If no lesion is found, the DNA wraps around the other UvrB subunit that will check the other stand for damage. The sequence is that of UvrABC system protein B from Clostridium acetobutylicum (strain ATCC 824 / DSM 792 / JCM 1419 / IAM 19013 / LMG 5710 / NBRC 13948 / NRRL B-527 / VKM B-1787 / 2291 / W).